The following is a 278-amino-acid chain: Tryptophan synthase alpha chain (278 aa).

Catalysis depends on proton acceptor residues E49 and D60.

The protein belongs to the TrpA family. As to quaternary structure, tetramer of two alpha and two beta chains.

It carries out the reaction (1S,2R)-1-C-(indol-3-yl)glycerol 3-phosphate + L-serine = D-glyceraldehyde 3-phosphate + L-tryptophan + H2O. Its pathway is amino-acid biosynthesis; L-tryptophan biosynthesis; L-tryptophan from chorismate: step 5/5. The alpha subunit is responsible for the aldol cleavage of indoleglycerol phosphate to indole and glyceraldehyde 3-phosphate. This Psychrobacter arcticus (strain DSM 17307 / VKM B-2377 / 273-4) protein is Tryptophan synthase alpha chain.